Reading from the N-terminus, the 291-residue chain is START domain-containing protein 10 (291 aa).

Met-1 bears the N-acetylmethionine mark. Residues 1 to 20 (MEKLAASTEPQGPRPVLGRE) form a disordered region. Residues 14-224 (RPVLGRESVQ…MYKACLKYPE (211 aa)) enclose the START domain. N6-succinyllysine occurs at positions 94, 197, and 202. A phosphoserine mark is found at Ser-253 and Ser-259. Residues 260–291 (LENIDESAVAESREERMGGAGGEGSDDDTSLT) are disordered. Ser-284 carries the post-translational modification Phosphoserine; by CK2. Ser-289 carries the post-translational modification Phosphoserine.

Post-translationally, phosphorylation at Ser-284 by CK2 negatively regulates lipid transfer activity, possibly by decreasing membrane association.

It is found in the cell projection. The protein resides in the cilium. Its subcellular location is the flagellum. It localises to the cytoplasm. The protein localises to the membrane. In terms of biological role, may play metabolic roles in sperm maturation or fertilization. Phospholipid transfer protein that preferentially selects lipid species containing a palmitoyl or stearoyl chain on the sn-1 and an unsaturated fatty acyl chain (18:1 or 18:2) on the sn-2 position. Able to transfer phosphatidylcholine (PC) and phosphatidyetanolamline (PE) between membranes. In Homo sapiens (Human), this protein is START domain-containing protein 10 (STARD10).